A 178-amino-acid chain; its full sequence is Interleukin-10 (178 aa).

The N-terminal stretch at 1 to 18 (MHSSALLCCLVLLTGVRA) is a signal peptide. Intrachain disulfides connect Cys-30–Cys-126 and Cys-80–Cys-132. Residue Asn-134 is glycosylated (N-linked (GlcNAc...) asparagine).

Belongs to the IL-10 family. As to quaternary structure, homodimer. Interacts with IL10RA and IL10RB.

It is found in the secreted. Its function is as follows. Major immune regulatory cytokine that acts on many cells of the immune system where it has profound anti-inflammatory functions, limiting excessive tissue disruption caused by inflammation. Mechanistically, IL10 binds to its heterotetrameric receptor comprising IL10RA and IL10RB leading to JAK1 and STAT2-mediated phosphorylation of STAT3. In turn, STAT3 translocates to the nucleus where it drives expression of anti-inflammatory mediators. Targets antigen-presenting cells (APCs) such as macrophages and monocytes and inhibits their release of pro-inflammatory cytokines including granulocyte-macrophage colony-stimulating factor /GM-CSF, granulocyte colony-stimulating factor/G-CSF, IL-1 alpha, IL-1 beta, IL-6, IL-8 and TNF-alpha. Also interferes with antigen presentation by reducing the expression of MHC-class II and co-stimulatory molecules, thereby inhibiting their ability to induce T cell activation. In addition, controls the inflammatory response of macrophages by reprogramming essential metabolic pathways including mTOR signaling. In Pan troglodytes (Chimpanzee), this protein is Interleukin-10 (IL10).